The sequence spans 227 residues: Mitochondrial inner membrane protease ATP23 (227 aa).

Histidine 129 serves as a coordination point for a divalent metal cation. Glutamate 130 is an active-site residue. Residue histidine 133 participates in a divalent metal cation binding.

This sequence belongs to the peptidase M76 family.

Its subcellular location is the mitochondrion inner membrane. Its function is as follows. Has a dual role in the assembly of mitochondrial ATPase. Acts as a protease that removes N-terminal residues of mitochondrial ATPase CF(0) subunit 6 at the intermembrane space side. Also involved in the correct assembly of the membrane-embedded ATPase CF(0) particle, probably mediating association of subunit 6 with the subunit 9 ring. This chain is Mitochondrial inner membrane protease ATP23 (ATP23), found in Cryptococcus neoformans var. neoformans serotype D (strain B-3501A) (Filobasidiella neoformans).